Reading from the N-terminus, the 220-residue chain is Charged multivesicular body protein 4b (220 aa).

2 disordered regions span residues 1–22 and 180–220; these read MSLFGKMFGSGGKGGKSASPQE and EIGD…WAAN. Coiled-coil stretches lie at residues 21–88 and 123–181; these read QEAI…STIE and IDKV…LLEI.

Belongs to the SNF7 family. In terms of assembly, probable core component of the endosomal sorting required for transport complex III (ESCRT-III). ESCRT-III components are thought to multimerize to form a flat lattice on the perimeter membrane of the endosome.

It localises to the cytoplasm. The protein resides in the cytosol. Its subcellular location is the late endosome membrane. It is found in the midbody. Probable core component of the endosomal sorting required for transport complex III (ESCRT-III) which is involved in multivesicular bodies (MVBs) formation and sorting of endosomal cargo proteins into MVBs. MVBs contain intraluminal vesicles (ILVs) that are generated by invagination and scission from the limiting membrane of the endosome and mostly are delivered to lysosomes enabling degradation of membrane proteins, such as stimulated growth factor receptors, lysosomal enzymes and lipids. In Danio rerio (Zebrafish), this protein is Charged multivesicular body protein 4b (chmp4b).